Consider the following 115-residue polypeptide: U3-lycotoxin-Ls1r (115 aa).

An N-terminal signal peptide occupies residues 1-20 (MKFVLLFGVLLVTLFSYSSA). The propeptide occupies 21–44 (EMLDDFHQADEDELVSLIKKEEAR). Disulfide bonds link C48-C63, C55-C72, C62-C87, and C74-C85.

This sequence belongs to the neurotoxin 19 (CSTX) family. 01 subfamily. As to expression, expressed by the venom gland.

The protein resides in the secreted. This is U3-lycotoxin-Ls1r from Lycosa singoriensis (Wolf spider).